A 141-amino-acid polypeptide reads, in one-letter code: Hydroperoxide reductase (141 aa).

It belongs to the OsmC/Ohr family. Homodimer.

Its subcellular location is the cytoplasm. In terms of biological role, reduces organic and inorganic peroxide substrates. Protects the cell against oxidative stress. This is Hydroperoxide reductase from Mycoplasma pneumoniae (strain ATCC 29342 / M129 / Subtype 1) (Mycoplasmoides pneumoniae).